The chain runs to 417 residues: Tyrosine--tRNA ligase (417 aa).

Tyr-39 is an L-tyrosine binding site. Residues 44–53 (ATATSLHIGN) carry the 'HIGH' region motif. L-tyrosine is bound by residues Tyr-176 and Gln-180. The 'KMSKS' region signature appears at 236–240 (KMGKS). Residue Lys-239 participates in ATP binding. The region spanning 350–416 (IGILSLLVTA…GKKKHVLVRP (67 aa)) is the S4 RNA-binding domain.

Belongs to the class-I aminoacyl-tRNA synthetase family. TyrS type 1 subfamily. In terms of assembly, homodimer.

The protein resides in the cytoplasm. The enzyme catalyses tRNA(Tyr) + L-tyrosine + ATP = L-tyrosyl-tRNA(Tyr) + AMP + diphosphate + H(+). Catalyzes the attachment of tyrosine to tRNA(Tyr) in a two-step reaction: tyrosine is first activated by ATP to form Tyr-AMP and then transferred to the acceptor end of tRNA(Tyr). The sequence is that of Tyrosine--tRNA ligase from Mesorhizobium japonicum (strain LMG 29417 / CECT 9101 / MAFF 303099) (Mesorhizobium loti (strain MAFF 303099)).